The following is a 208-amino-acid chain: Fibroblast growth factor 10 (208 aa).

Residues 1 to 37 form the signal peptide; that stretch reads MWKWILTHCASAFPHLPGCCCCCFLLLFLVSSVPVTC. N51 and N196 each carry an N-linked (GlcNAc...) asparagine glycan.

The protein belongs to the heparin-binding growth factors family. Interacts with FGFR1 and FGFR2. Interacts with FGFBP1.

The protein localises to the secreted. Plays an important role in the regulation of embryonic development, cell proliferation and cell differentiation. Required for normal branching morphogenesis. May play a role in wound healing. This chain is Fibroblast growth factor 10 (FGF10), found in Homo sapiens (Human).